The chain runs to 255 residues: 14-3-3-like protein GF14 psi (255 aa).

Position 66 is a phosphoserine (Ser66). Thr162 carries the phosphothreonine modification. Ser189 bears the Phosphoserine mark. 2 positions are modified to phosphothreonine: Thr210 and Thr238.

The protein belongs to the 14-3-3 family. In terms of assembly, component of a DNA binding complex that binds to the G box. Interacts with IDH3, AGT3, GLN1-1, GLN1-2, GLN1-4, SAM1, SAM2, MDH1, METK3 and MDH2. Binds to 1-aminocyclopropane-1-carboxylate synthases (ACS) such as ACS2, ACS5, ACS6, ACS8, and ACS11. Interacts with FD. Interacts with DREB1A and DREB1B in the nucleus. Interacts with CINV1.

It localises to the cytoplasm. Its subcellular location is the nucleus. Functionally, is associated with a DNA binding complex that binds to the G box, a well-characterized cis-acting DNA regulatory element found in plant genes. Involved in the regulation of nutrient metabolism. Reciprocal negative transcription regulation of miR396. Negative regulator of constitutive freezing tolerance and cold acclimation by controlling cold-induced gene expression partially through an ethylene (ET)-dependent pathway; prevents ethylene (ET) biosynthesis, probably by binding 1-aminocyclopropane-1-carboxylate synthases (ACS) to reduce their stability, thus contributing to establish adequate ET levels under both standard and low-temperature conditions. The sequence is that of 14-3-3-like protein GF14 psi from Arabidopsis thaliana (Mouse-ear cress).